The chain runs to 309 residues: D-alanine--D-alanine ligase (309 aa).

Residues 99 to 304 enclose the ATP-grasp domain; that stretch reads KRVLLQAGIP…FPDLVQKIVD (206 aa). 132-187 provides a ligand contact to ATP; sequence LKELGLPVVIKAPTQGSTIGTFIVREEGELEPAIAGALKYDLSFMAEAYLAGPEIT. Mg(2+) contacts are provided by aspartate 258, glutamate 271, and asparagine 273.

The protein belongs to the D-alanine--D-alanine ligase family. It depends on Mg(2+) as a cofactor. The cofactor is Mn(2+).

The protein resides in the cytoplasm. It carries out the reaction 2 D-alanine + ATP = D-alanyl-D-alanine + ADP + phosphate + H(+). Its pathway is cell wall biogenesis; peptidoglycan biosynthesis. Functionally, cell wall formation. This is D-alanine--D-alanine ligase from Moorella thermoacetica (strain ATCC 39073 / JCM 9320).